The following is a 160-amino-acid chain: 2-C-methyl-D-erythritol 2,4-cyclodiphosphate synthase (160 aa).

The a divalent metal cation site is built by D11 and H13. 4-CDP-2-C-methyl-D-erythritol 2-phosphate-binding positions include 11–13 and 37–38; these read DVH and HS. H45 is a binding site for a divalent metal cation. 4-CDP-2-C-methyl-D-erythritol 2-phosphate is bound by residues 59–61 and R145; that span reads DIG.

It belongs to the IspF family. As to quaternary structure, homotrimer. It depends on a divalent metal cation as a cofactor.

It carries out the reaction 4-CDP-2-C-methyl-D-erythritol 2-phosphate = 2-C-methyl-D-erythritol 2,4-cyclic diphosphate + CMP. Its pathway is isoprenoid biosynthesis; isopentenyl diphosphate biosynthesis via DXP pathway; isopentenyl diphosphate from 1-deoxy-D-xylulose 5-phosphate: step 4/6. In terms of biological role, involved in the biosynthesis of isopentenyl diphosphate (IPP) and dimethylallyl diphosphate (DMAPP), two major building blocks of isoprenoid compounds. Catalyzes the conversion of 4-diphosphocytidyl-2-C-methyl-D-erythritol 2-phosphate (CDP-ME2P) to 2-C-methyl-D-erythritol 2,4-cyclodiphosphate (ME-CPP) with a corresponding release of cytidine 5-monophosphate (CMP). In Neisseria meningitidis serogroup A / serotype 4A (strain DSM 15465 / Z2491), this protein is 2-C-methyl-D-erythritol 2,4-cyclodiphosphate synthase.